A 379-amino-acid polypeptide reads, in one-letter code: MNPITYELIKTDKQTGARLGRVHTPHGSFDTPTFMPVGTLATVKTMSPEDLQSMQANIILSNTYHLWLRPGEDIIREAGGLHKFMNWDGAILTDSGGFQVFSLSDMREIKEEGVHFRNHLNGEKLFLSPEKAMDIQNALGSDIMMAFDECPPYPAEYDYMKASVERTSRWAERCLQAHNRPHDQGLFGIVQGGEYEALRKQSAEDLVSLDFPGYAIGGLSVGEPKHVMNKVLEFTTPFLPSNKPRYLMGVGSPDALIDGAIRGVDMFDCVLPTRIARNGTCMTSNGRLVVRNAKYARDFNPIDEHCSCHVCKNYSRAYIRHLIKCNETFGFRLTTYHNLHFLLKLMEQVRTAIKEDRLGDFKESFFEQYGLNKANPKNF.

Catalysis depends on Asp94, which acts as the Proton acceptor. Substrate-binding positions include 94–98 (DSGGF), Asp148, Gln191, and Gly218. Positions 249-255 (GVGSPDA) are RNA binding. Residue Asp268 is the Nucleophile of the active site. An RNA binding; important for wobble base 34 recognition region spans residues 273–277 (TRIAR). Zn(2+) is bound by residues Cys306, Cys308, Cys311, and His337.

It belongs to the queuine tRNA-ribosyltransferase family. Homodimer. Within each dimer, one monomer is responsible for RNA recognition and catalysis, while the other monomer binds to the replacement base PreQ1. It depends on Zn(2+) as a cofactor.

The catalysed reaction is 7-aminomethyl-7-carbaguanine + guanosine(34) in tRNA = 7-aminomethyl-7-carbaguanosine(34) in tRNA + guanine. It participates in tRNA modification; tRNA-queuosine biosynthesis. Functionally, catalyzes the base-exchange of a guanine (G) residue with the queuine precursor 7-aminomethyl-7-deazaguanine (PreQ1) at position 34 (anticodon wobble position) in tRNAs with GU(N) anticodons (tRNA-Asp, -Asn, -His and -Tyr). Catalysis occurs through a double-displacement mechanism. The nucleophile active site attacks the C1' of nucleotide 34 to detach the guanine base from the RNA, forming a covalent enzyme-RNA intermediate. The proton acceptor active site deprotonates the incoming PreQ1, allowing a nucleophilic attack on the C1' of the ribose to form the product. After dissociation, two additional enzymatic reactions on the tRNA convert PreQ1 to queuine (Q), resulting in the hypermodified nucleoside queuosine (7-(((4,5-cis-dihydroxy-2-cyclopenten-1-yl)amino)methyl)-7-deazaguanosine). The chain is Queuine tRNA-ribosyltransferase from Oceanobacillus iheyensis (strain DSM 14371 / CIP 107618 / JCM 11309 / KCTC 3954 / HTE831).